Here is a 376-residue protein sequence, read N- to C-terminus: Rhodopsin (376 aa).

The Extracellular portion of the chain corresponds to 1 to 51; it reads MSLINEPSYSAYSWGGQGGYGNQTVVDKVLPEMLHLIDPHWYQFPPMNPLW. Residue N22 is glycosylated (N-linked (GlcNAc...) asparagine). The chain crosses the membrane as a helical span at residues 52–76; that stretch reads HGLLGFVIGCLGFVSVVGNGMVIYI. At 77–88 the chain is on the cytoplasmic side; the sequence is FSTTKGLRTPSN. The chain crosses the membrane as a helical span at residues 89–113; it reads LLVVNLAFSDFLMMLSMSPPMVINC. The Extracellular portion of the chain corresponds to 114-128; sequence YYETWVLGPFMCELY. The cysteines at positions 125 and 202 are disulfide-linked. Residues 129–148 form a helical membrane-spanning segment; the sequence is ALLGSLFGCGSIWTMVMIAL. The Cytoplasmic portion of the chain corresponds to 149–167; that stretch reads DRYNVIVKGLAAKPMTNKT. The helical transmembrane segment at 168–191 threads the bilayer; the sequence is AMLRILGIWAMSIAWTVFPLFGWN. Topologically, residues 192–215 are extracellular; that stretch reads RYVPEGNMTACGTDYLNKEWVSRS. Residue N198 is glycosylated (N-linked (GlcNAc...) asparagine). The chain crosses the membrane as a helical span at residues 216–243; the sequence is YILVYSVFVYFLPLATIIYSYWFIVQAV. At 244–278 the chain is on the cytoplasmic side; sequence SAHEKQMREQAKKMNVASLRSAENANTSAECKLAK. The helical transmembrane segment at 279–302 threads the bilayer; it reads VALMTISLWFFAWTPYLVTDFSGI. The Extracellular segment spans residues 303–309; the sequence is FEWGKIS. Residues 310–334 traverse the membrane as a helical segment; sequence PLATIWCSLFAKANAVYNPIVYGIS. K321 bears the N6-(retinylidene)lysine mark. Residues 335-376 lie on the Cytoplasmic side of the membrane; the sequence is HPKYRAALNKKFPSLACASEPDDTASQASGATTVSDEKSASA. A disordered region spans residues 353–376; it reads SEPDDTASQASGATTVSDEKSASA. The span at 358–368 shows a compositional bias: polar residues; sequence TASQASGATTV.

It belongs to the G-protein coupled receptor 1 family. Opsin subfamily. Phosphorylated on some or all of the serine and threonine residues present in the C-terminal region.

Its subcellular location is the membrane. In terms of biological role, visual pigments are the light-absorbing molecules that mediate vision. They consist of an apoprotein, opsin, covalently linked to cis-retinal. In Sphodromantis sp. (Mantis), this protein is Rhodopsin.